Reading from the N-terminus, the 460-residue chain is L-seryl-tRNA(Sec) selenium transferase (460 aa).

At Lys-293 the chain carries N6-(pyridoxal phosphate)lysine.

This sequence belongs to the SelA family. Requires pyridoxal 5'-phosphate as cofactor.

It is found in the cytoplasm. It carries out the reaction L-seryl-tRNA(Sec) + selenophosphate + H(+) = L-selenocysteinyl-tRNA(Sec) + phosphate. It participates in aminoacyl-tRNA biosynthesis; selenocysteinyl-tRNA(Sec) biosynthesis; selenocysteinyl-tRNA(Sec) from L-seryl-tRNA(Sec) (bacterial route): step 1/1. Its function is as follows. Converts seryl-tRNA(Sec) to selenocysteinyl-tRNA(Sec) required for selenoprotein biosynthesis. The polypeptide is L-seryl-tRNA(Sec) selenium transferase (Pasteurella multocida (strain Pm70)).